The sequence spans 51 residues: Zinc metalloproteinase-disintegrin-like crovidisin (51 aa).

Residues 1 to 12 enclose the Peptidase M12B domain; that stretch reads AMVTKNNGDLDK. A Disintegrin domain is found at 13–18; the sequence is SGTECR. A glycan (N-linked (GlcNAc...) asparagine) is linked at N29.

The protein belongs to the venom metalloproteinase (M12B) family. P-III subfamily. P-IIIa sub-subfamily. As to quaternary structure, monomer. The cofactor is Zn(2+). Expressed by the venom gland.

The protein localises to the secreted. In terms of biological role, snake venom zinc metalloproteinase-disintegrin-like that blocks the interaction between platelets and collagen fibers through its binding to collagen fibers, resulting in the blockade of collagen-mediated platelet functions such as adhesion, release reaction, thromboxane formation, and aggregation. Binds selectively to collagen type I with high affinity. Also exerts proteolytic activity to matrix. The protein is Zinc metalloproteinase-disintegrin-like crovidisin of Crotalus viridis viridis (Prairie rattlesnake).